The sequence spans 511 residues: Coatomer subunit delta (511 aa).

Residues 168–177 (QARRDAERQG) are compositionally biased toward basic and acidic residues. A disordered region spans residues 168 to 188 (QARRDAERQGKKAPGFGGFGS). Ser-223 bears the Phosphoserine mark. N6-acetyllysine is present on residues Lys-233 and Lys-241. Residue Ser-244 is modified to Phosphoserine. The MHD domain maps to 271–511 (MESVHMKIEE…TFLVDKYEIL (241 aa)). N6-acetyllysine occurs at positions 309 and 351. The residue at position 493 (Ser-493) is a Phosphoserine.

The protein belongs to the adaptor complexes medium subunit family. Delta-COP subfamily. In terms of assembly, oligomeric complex that consists of at least the alpha, beta, beta', gamma, delta, epsilon and zeta subunits.

Its subcellular location is the cytoplasm. It is found in the golgi apparatus membrane. The protein localises to the cytoplasmic vesicle. The protein resides in the COPI-coated vesicle membrane. Its function is as follows. The coatomer is a cytosolic protein complex that binds to dilysine motifs and reversibly associates with Golgi non-clathrin-coated vesicles, which further mediate biosynthetic protein transport from the ER, via the Golgi up to the trans Golgi network. Coatomer complex is required for budding from Golgi membranes, and is essential for the retrograde Golgi-to-ER transport of dilysine-tagged proteins. In mammals, the coatomer can only be recruited by membranes associated to ADP-ribosylation factors (ARFs), which are small GTP-binding proteins; the complex also influences the Golgi structural integrity, as well as the processing, activity, and endocytic recycling of LDL receptors. The sequence is that of Coatomer subunit delta (Arcn1) from Rattus norvegicus (Rat).